Here is a 199-residue protein sequence, read N- to C-terminus: MVLVKICGLMHSEDILAVNTAGADFAGFVFAPGRHQISLEQALSLKQLLHPKIKTVGVFVNEPVAEILAIYQAGAIDVAQLHGKSTPTEITQFQQAGLKVIQVFERQAIDLTSMADYLMVDSGKGSGQLLNLKAIPHISRPLILAGGLTPLNVRQAVQLVQPTMVDVSSGVETNGHKDADKITQFIQQAKEDIIYEDIK.

The protein belongs to the TrpF family.

The enzyme catalyses N-(5-phospho-beta-D-ribosyl)anthranilate = 1-(2-carboxyphenylamino)-1-deoxy-D-ribulose 5-phosphate. The protein operates within amino-acid biosynthesis; L-tryptophan biosynthesis; L-tryptophan from chorismate: step 3/5. This Lacticaseibacillus paracasei (strain ATCC 334 / BCRC 17002 / CCUG 31169 / CIP 107868 / KCTC 3260 / NRRL B-441) (Lactobacillus paracasei) protein is N-(5'-phosphoribosyl)anthranilate isomerase.